Consider the following 345-residue polypeptide: Biotin synthase (345 aa).

One can recognise a Radical SAM core domain in the interval arginine 38–alanine 256. Residues cysteine 53, cysteine 57, and cysteine 60 each contribute to the [4Fe-4S] cluster site. [2Fe-2S] cluster-binding residues include cysteine 97, cysteine 128, cysteine 188, and arginine 260.

This sequence belongs to the radical SAM superfamily. Biotin synthase family. Homodimer. Requires [4Fe-4S] cluster as cofactor. [2Fe-2S] cluster is required as a cofactor.

It catalyses the reaction (4R,5S)-dethiobiotin + (sulfur carrier)-SH + 2 reduced [2Fe-2S]-[ferredoxin] + 2 S-adenosyl-L-methionine = (sulfur carrier)-H + biotin + 2 5'-deoxyadenosine + 2 L-methionine + 2 oxidized [2Fe-2S]-[ferredoxin]. It participates in cofactor biosynthesis; biotin biosynthesis; biotin from 7,8-diaminononanoate: step 2/2. Catalyzes the conversion of dethiobiotin (DTB) to biotin by the insertion of a sulfur atom into dethiobiotin via a radical-based mechanism. This chain is Biotin synthase, found in Serratia proteamaculans (strain 568).